A 341-amino-acid polypeptide reads, in one-letter code: tRNA N6-adenosine threonylcarbamoyltransferase (341 aa).

The Fe cation site is built by H111 and H115. Substrate is bound by residues 134–138 (LVSGG), D167, G180, and N272. D300 contacts Fe cation.

The protein belongs to the KAE1 / TsaD family. The cofactor is Fe(2+).

It is found in the cytoplasm. It carries out the reaction L-threonylcarbamoyladenylate + adenosine(37) in tRNA = N(6)-L-threonylcarbamoyladenosine(37) in tRNA + AMP + H(+). Its function is as follows. Required for the formation of a threonylcarbamoyl group on adenosine at position 37 (t(6)A37) in tRNAs that read codons beginning with adenine. Is involved in the transfer of the threonylcarbamoyl moiety of threonylcarbamoyl-AMP (TC-AMP) to the N6 group of A37, together with TsaE and TsaB. TsaD likely plays a direct catalytic role in this reaction. The chain is tRNA N6-adenosine threonylcarbamoyltransferase from Blochmanniella pennsylvanica (strain BPEN).